The primary structure comprises 201 residues: Recombination protein RecR (201 aa).

Residues 60–75 form a C4-type zinc finger; that stretch reads CKRCGSYAETEICEIC. In terms of domain architecture, Toprim spans 83 to 178; the sequence is HTFCVVEQPE…NVTRIAYGIT (96 aa).

The protein belongs to the RecR family.

May play a role in DNA repair. It seems to be involved in an RecBC-independent recombinational process of DNA repair. It may act with RecF and RecO. This Leptospira interrogans serogroup Icterohaemorrhagiae serovar copenhageni (strain Fiocruz L1-130) protein is Recombination protein RecR.